We begin with the raw amino-acid sequence, 327 residues long: Ribose-phosphate pyrophosphokinase (327 aa).

Residues aspartate 40 to glutamate 42 and arginine 99 to glutamine 100 contribute to the ATP site. Histidine 134 and aspartate 173 together coordinate Mg(2+). Residue lysine 196 is part of the active site. Residues arginine 198, aspartate 222, and aspartate 226–threonine 230 each bind D-ribose 5-phosphate.

It belongs to the ribose-phosphate pyrophosphokinase family. Class I subfamily. In terms of assembly, homohexamer. Mg(2+) is required as a cofactor.

The protein localises to the cytoplasm. It carries out the reaction D-ribose 5-phosphate + ATP = 5-phospho-alpha-D-ribose 1-diphosphate + AMP + H(+). It functions in the pathway metabolic intermediate biosynthesis; 5-phospho-alpha-D-ribose 1-diphosphate biosynthesis; 5-phospho-alpha-D-ribose 1-diphosphate from D-ribose 5-phosphate (route I): step 1/1. Involved in the biosynthesis of the central metabolite phospho-alpha-D-ribosyl-1-pyrophosphate (PRPP) via the transfer of pyrophosphoryl group from ATP to 1-hydroxyl of ribose-5-phosphate (Rib-5-P). The protein is Ribose-phosphate pyrophosphokinase of Neisseria meningitidis serogroup A / serotype 4A (strain DSM 15465 / Z2491).